The primary structure comprises 873 residues: Zinc fingers and homeoboxes protein 1 (873 aa).

The interval 24-63 (LISDLDEGPPVLTPVENTRAESISSDEEVHESVDSDNQQN) is disordered. Phosphothreonine is present on Thr-36. Phosphoserine occurs at positions 45, 47, and 48. 2 consecutive C2H2-type zinc fingers follow at residues 70 to 93 (YECK…DSEH) and 102 to 125 (YVCV…LKYH). Lys-159 is covalently cross-linked (Glycyl lysine isopeptide (Lys-Gly) (interchain with G-Cter in SUMO2)). The tract at residues 200-236 (HNSVEDVPEEKENEIKPDREEIVENPSSSASESNTST) is disordered. Ser-202 bears the Phosphoserine mark. Residues 212–221 (NEIKPDREEI) are compositionally biased toward basic and acidic residues. Residues 223-236 (ENPSSSASESNTST) are compositionally biased toward low complexity. The required for dimerization stretch occupies residues 272 to 432 (NSNLIPKVLI…QNNIQKSQVP (161 aa)). The segment at 272-564 (NSNLIPKVLI…AQPKQSWNPF (293 aa)) is required for interaction with NFYA. Positions 284-346 (NSIPTYNAAL…LKHGVSWTPE (63 aa)) form a DNA-binding region, homeobox 1. Residues Lys-441, Lys-454, Lys-485, and Lys-629 each participate in a glycyl lysine isopeptide (Lys-Gly) (interchain with G-Cter in SUMO2) cross-link. DNA-binding regions (homeobox) lie at residues 464-526 (SFGI…KSNQ) and 569-630 (PQKF…EEKM). Disordered regions lie at residues 626–667 (KEEK…ICKK) and 732–769 (SSMN…INNW). Ser-648 carries the phosphoserine modification. The homeobox 4 DNA-binding region spans 660-722 (STGKICKKTP…YAWKNGNLKW (63 aa)). The tract at residues 734 to 768 (MNGLSSLRKRGRGRPKGRGRGRPRGRPRGSKRINN) is required for nuclear localization. A compositionally biased stretch (basic residues) spans 740-764 (LRKRGRGRPKGRGRGRPRGRPRGSK). Ser-774 carries the phosphoserine modification. The homeobox 5 DNA-binding region spans 777 to 832 (KFKTGTAILKDYYLKHKFLNEQDLDELVNKSHMGYEQVREWFAERQRRSELGIELF). Residues 829-873 (IELFEENEEEDEVIDDQEEDEEETDDSDTWEPPRHVKRKLSKSDD) form a disordered region. Residues 831-857 (LFEENEEEDEVIDDQEEDEEETDDSDT) show a composition bias toward acidic residues. The required for repressor activity stretch occupies residues 831–873 (LFEENEEEDEVIDDQEEDEEETDDSDTWEPPRHVKRKLSKSDD). The span at 863 to 873 (HVKRKLSKSDD) shows a compositional bias: basic residues.

Belongs to the ZHX family. Forms homodimers. Heterodimer (via HD1 domain) with ZHX2 (via HD1 domain). Also forms a heterodimer with ZHX3 which is a prerequisite for repressor activity. Interacts with ATF7IP and NFYA. Interacts (via homeobox domains) with DNMT3B (via PWWP domain).

It is found in the nucleus. Functionally, acts as a transcriptional repressor. Increases DNMT3B-mediated repressive transcriptional activity when DNMT3B is tethered to DNA. May link molecule between DNMT3B and other co-repressor proteins. The sequence is that of Zinc fingers and homeoboxes protein 1 (ZHX1) from Pan troglodytes (Chimpanzee).